Here is a 375-residue protein sequence, read N- to C-terminus: Protein RecA (375 aa).

88–95 (GPESSGKT) lines the ATP pocket.

It belongs to the RecA family.

It localises to the cytoplasm. Functionally, can catalyze the hydrolysis of ATP in the presence of single-stranded DNA, the ATP-dependent uptake of single-stranded DNA by duplex DNA, and the ATP-dependent hybridization of homologous single-stranded DNAs. It interacts with LexA causing its activation and leading to its autocatalytic cleavage. This Rhodopirellula baltica (strain DSM 10527 / NCIMB 13988 / SH1) protein is Protein RecA.